A 651-amino-acid polypeptide reads, in one-letter code: Kinesin-like protein KIF22-A (651 aa).

Residues 31-359 (RVRVAVRLRP…LNFAAKSKQI (329 aa)) enclose the Kinesin motor domain. 116–123 (GPTGAGKT) is an ATP binding site. Residues 366–413 (QETTQTVVQPAMKRPREETGHIAGSQKRKKSKNDSTESSPNSSMDTAG) form a disordered region. The segment covering 401–410 (TESSPNSSMD) has biased composition (polar residues). The stretch at 452–498 (KRERMALLKKWEESQMEIERLKEKQKELEQKAMEAEARLEKSNNSDL) forms a coiled coil. Residues 561–564 (GLEN) carry the Important for regulated proteolytic degradation motif.

This sequence belongs to the TRAFAC class myosin-kinesin ATPase superfamily. Kinesin family. In terms of processing, ubiquitinated, leading to its subsequent proteasomal degradation.

The protein localises to the nucleus. The protein resides in the cytoplasm. Its subcellular location is the cytoskeleton. Functionally, kinesin family member that is involved in spindle formation and the movements of chromosomes during mitosis and meiosis. Binds to microtubules and to DNA. In Xenopus laevis (African clawed frog), this protein is Kinesin-like protein KIF22-A (kif22-a).